The sequence spans 629 residues: tRNA uridine 5-carboxymethylaminomethyl modification enzyme MnmG (629 aa).

13–18 (GGGHAG) is an FAD binding site. 273–287 (GPRYCPSIEDKIHRF) serves as a coordination point for NAD(+).

It belongs to the MnmG family. As to quaternary structure, homodimer. Heterotetramer of two MnmE and two MnmG subunits. It depends on FAD as a cofactor.

The protein resides in the cytoplasm. NAD-binding protein involved in the addition of a carboxymethylaminomethyl (cmnm) group at the wobble position (U34) of certain tRNAs, forming tRNA-cmnm(5)s(2)U34. This Shewanella baltica (strain OS195) protein is tRNA uridine 5-carboxymethylaminomethyl modification enzyme MnmG.